A 393-amino-acid chain; its full sequence is Acetylornithine aminotransferase (393 aa).

Pyridoxal 5'-phosphate-binding positions include 100–101 (GT) and phenylalanine 132. Arginine 135 contributes to the N(2)-acetyl-L-ornithine binding site. 217–220 (DEIQ) contacts pyridoxal 5'-phosphate. Lysine 246 bears the N6-(pyridoxal phosphate)lysine mark. Serine 275 lines the N(2)-acetyl-L-ornithine pocket. A pyridoxal 5'-phosphate-binding site is contributed by threonine 276.

The protein belongs to the class-III pyridoxal-phosphate-dependent aminotransferase family. ArgD subfamily. Homodimer. Pyridoxal 5'-phosphate serves as cofactor.

It is found in the cytoplasm. The enzyme catalyses N(2)-acetyl-L-ornithine + 2-oxoglutarate = N-acetyl-L-glutamate 5-semialdehyde + L-glutamate. The protein operates within amino-acid biosynthesis; L-arginine biosynthesis; N(2)-acetyl-L-ornithine from L-glutamate: step 4/4. In Campylobacter jejuni subsp. jejuni serotype O:2 (strain ATCC 700819 / NCTC 11168), this protein is Acetylornithine aminotransferase.